The primary structure comprises 311 residues: Glycine--tRNA ligase alpha subunit (311 aa).

This sequence belongs to the class-II aminoacyl-tRNA synthetase family. As to quaternary structure, tetramer of two alpha and two beta subunits.

The protein resides in the cytoplasm. The catalysed reaction is tRNA(Gly) + glycine + ATP = glycyl-tRNA(Gly) + AMP + diphosphate. In Brucella anthropi (strain ATCC 49188 / DSM 6882 / CCUG 24695 / JCM 21032 / LMG 3331 / NBRC 15819 / NCTC 12168 / Alc 37) (Ochrobactrum anthropi), this protein is Glycine--tRNA ligase alpha subunit.